The following is a 341-amino-acid chain: MKVSDFYFELPEELIAQYPLEKRDSSRLMVLDKKTGEIEHRKFHDILEYLNEGDTLVLNNTRVLPARLIGEKEETGGKIEFLLLKRIEGDKWECLAKPGRKAKVGTVFTFGEGKLKAIVREIGEEGNRIIEFKYDGIFEQVLDELGQMPLPPYIHEKLEDKERYQTVYSKEKGSAAAPTAGLHFTEDLLKEIKDKGVNIAYLTLHVGLGTFRPVKVDDVNNHVMHSEYYHLDKENAELINKTKEAGKRVIAVGTTSSRTLETIGDENGRVREQSGWTDIFIYPGYKFKIVDNLITNFHLPESTLIMLVSALAGQDNIMNAYNTAVKEKYRFFSFGDSMFIK.

It belongs to the QueA family. Monomer.

The protein localises to the cytoplasm. The enzyme catalyses 7-aminomethyl-7-carbaguanosine(34) in tRNA + S-adenosyl-L-methionine = epoxyqueuosine(34) in tRNA + adenine + L-methionine + 2 H(+). Its pathway is tRNA modification; tRNA-queuosine biosynthesis. Functionally, transfers and isomerizes the ribose moiety from AdoMet to the 7-aminomethyl group of 7-deazaguanine (preQ1-tRNA) to give epoxyqueuosine (oQ-tRNA). This chain is S-adenosylmethionine:tRNA ribosyltransferase-isomerase, found in Clostridium perfringens (strain SM101 / Type A).